A 259-amino-acid polypeptide reads, in one-letter code: UDP-2,3-diacylglucosamine hydrolase (259 aa).

Residues Asp8, His10, Asp41, Asn79, and His114 each contribute to the Mn(2+) site. Residue 79–80 (NR) coordinates substrate. Asp122, Ser160, Asn164, Lys167, and His195 together coordinate substrate. Mn(2+) is bound by residues His195 and His197.

The protein belongs to the LpxH family. It depends on Mn(2+) as a cofactor.

The protein localises to the cell inner membrane. The catalysed reaction is UDP-2-N,3-O-bis[(3R)-3-hydroxytetradecanoyl]-alpha-D-glucosamine + H2O = 2-N,3-O-bis[(3R)-3-hydroxytetradecanoyl]-alpha-D-glucosaminyl 1-phosphate + UMP + 2 H(+). Its pathway is glycolipid biosynthesis; lipid IV(A) biosynthesis; lipid IV(A) from (3R)-3-hydroxytetradecanoyl-[acyl-carrier-protein] and UDP-N-acetyl-alpha-D-glucosamine: step 4/6. Functionally, hydrolyzes the pyrophosphate bond of UDP-2,3-diacylglucosamine to yield 2,3-diacylglucosamine 1-phosphate (lipid X) and UMP by catalyzing the attack of water at the alpha-P atom. Involved in the biosynthesis of lipid A, a phosphorylated glycolipid that anchors the lipopolysaccharide to the outer membrane of the cell. This is UDP-2,3-diacylglucosamine hydrolase from Edwardsiella ictaluri (strain 93-146).